The primary structure comprises 415 residues: MAIKKRSATVVPGASGAAAAVKNPQASKSSFWGELPQHVMSGISRMVPTLIMGGVILAFSQLIAYSWLKIPAEIGIMDALNSGKFSGFDLSLLKFAWLSQSFGGVLFGFAIPMFAAFVANSIGGKLAFPAGFIGGLMSTQPTQLLNFDPSTMQWATSSPVPSTFIGALIISIVAGYLVKWMNQKIQLPDFLLAFKTTFLLPILSAIFVMLAMYYVITPFGGWINGGIRTVLTAAGEKGALMYAMGIAAATAIDLGGPINKAAGFVAFSFTTDHVLPVTARSIAIVIPPIGLGLATIIDRRLTGKRLFNAQLYPQGKTAMFLAFMGISEGAIPFALESPITAIPSYMVGAIVGSTAAVWLGAVQWFPESAIWAWPLVTNLGVYMAGIALGAVITALMVVFLRLMMFRKGKLLIDSL.

Over 1–46 (MAIKKRSATVVPGASGAAAAVKNPQASKSSFWGELPQHVMSGISRM) the chain is Cytoplasmic. The 376-residue stretch at 35–410 (LPQHVMSGIS…RLMMFRKGKL (376 aa)) folds into the PTS EIIC type-2 domain. Residues 47-67 (VPTLIMGGVILAFSQLIAYSW) traverse the membrane as a helical segment. Residues 68-101 (LKIPAEIGIMDALNSGKFSGFDLSLLKFAWLSQS) are Periplasmic-facing. Residues 102 to 122 (FGGVLFGFAIPMFAAFVANSI) traverse the membrane as a helical segment. Over 123-126 (GGKL) the chain is Cytoplasmic. A helical membrane pass occupies residues 127 to 147 (AFPAGFIGGLMSTQPTQLLNF). At 148–157 (DPSTMQWATS) the chain is on the periplasmic side. The chain crosses the membrane as a helical span at residues 158-178 (SPVPSTFIGALIISIVAGYLV). Residues 179–197 (KWMNQKIQLPDFLLAFKTT) lie on the Cytoplasmic side of the membrane. The helical transmembrane segment at 198–218 (FLLPILSAIFVMLAMYYVITP) threads the bilayer. The Periplasmic segment spans residues 219 to 237 (FGGWINGGIRTVLTAAGEK). Residues 238–258 (GALMYAMGIAAATAIDLGGPI) traverse the membrane as a helical segment. Topologically, residues 259 to 276 (NKAAGFVAFSFTTDHVLP) are cytoplasmic. A helical membrane pass occupies residues 277-297 (VTARSIAIVIPPIGLGLATII). Topologically, residues 298–318 (DRRLTGKRLFNAQLYPQGKTA) are periplasmic. Residues 319–339 (MFLAFMGISEGAIPFALESPI) form a helical membrane-spanning segment. Topologically, residues 340-341 (TA) are cytoplasmic. The helical transmembrane segment at 342–362 (IPSYMVGAIVGSTAAVWLGAV) threads the bilayer. Residues 363-378 (QWFPESAIWAWPLVTN) are Periplasmic-facing. A helical membrane pass occupies residues 379–399 (LGVYMAGIALGAVITALMVVF). The Cytoplasmic segment spans residues 400 to 415 (LRLMMFRKGKLLIDSL).

The protein resides in the cell inner membrane. In terms of biological role, the phosphoenolpyruvate-dependent sugar phosphotransferase system (PTS), a major carbohydrate active -transport system, catalyzes the phosphorylation of incoming sugar substrates concomitant with their translocation across the cell membrane. This is Fructose-like permease IIC component (fryC) from Escherichia coli O157:H7.